The primary structure comprises 259 residues: GTP cyclohydrolase FolE2 (259 aa).

This sequence belongs to the GTP cyclohydrolase IV family.

It carries out the reaction GTP + H2O = 7,8-dihydroneopterin 3'-triphosphate + formate + H(+). The protein operates within cofactor biosynthesis; 7,8-dihydroneopterin triphosphate biosynthesis; 7,8-dihydroneopterin triphosphate from GTP: step 1/1. In terms of biological role, converts GTP to 7,8-dihydroneopterin triphosphate. The protein is GTP cyclohydrolase FolE2 of Halorhodospira halophila (strain DSM 244 / SL1) (Ectothiorhodospira halophila (strain DSM 244 / SL1)).